The following is a 300-amino-acid chain: ATP synthase gamma chain (300 aa).

This sequence belongs to the ATPase gamma chain family. As to quaternary structure, F-type ATPases have 2 components, CF(1) - the catalytic core - and CF(0) - the membrane proton channel. CF(1) has five subunits: alpha(3), beta(3), gamma(1), delta(1), epsilon(1). CF(0) has three main subunits: a, b and c.

The protein localises to the cell membrane. Its function is as follows. Produces ATP from ADP in the presence of a proton gradient across the membrane. The gamma chain is believed to be important in regulating ATPase activity and the flow of protons through the CF(0) complex. The polypeptide is ATP synthase gamma chain (Enterococcus hirae (strain ATCC 9790 / DSM 20160 / JCM 8729 / LMG 6399 / NBRC 3181 / NCIMB 6459 / NCDO 1258 / NCTC 12367 / WDCM 00089 / R)).